A 206-amino-acid polypeptide reads, in one-letter code: Uridine kinase (206 aa).

ATP is bound at residue 9–16 (GGSGSGKT).

Belongs to the uridine kinase family.

The protein resides in the cytoplasm. The enzyme catalyses uridine + ATP = UMP + ADP + H(+). The catalysed reaction is cytidine + ATP = CMP + ADP + H(+). The protein operates within pyrimidine metabolism; CTP biosynthesis via salvage pathway; CTP from cytidine: step 1/3. It functions in the pathway pyrimidine metabolism; UMP biosynthesis via salvage pathway; UMP from uridine: step 1/1. This is Uridine kinase from Borrelia hermsii (strain HS1 / DAH).